A 68-amino-acid polypeptide reads, in one-letter code: U2-agatoxin-Ao1u (68 aa).

A signal peptide spans 1–20 (MKAIISLLLISAMVFSMIEA). A propeptide spanning residues 21 to 34 (VPLEEGLQLFEGER) is cleaved from the precursor. 3 cysteine pairs are disulfide-bonded: Cys36–Cys52, Cys43–Cys57, and Cys51–Cys67.

The protein belongs to the neurotoxin 01 (U2-agtx) family. In terms of tissue distribution, expressed by the venom gland.

The protein resides in the secreted. Functionally, insect active toxin causing rapid but reversible paralysis in crickets. No activity shown in mammals. Does not show effect on mammalian voltage-gated calcium channels. This Agelena orientalis (Funnel-web spider) protein is U2-agatoxin-Ao1u.